We begin with the raw amino-acid sequence, 172 residues long: Cytidylate kinase (172 aa).

8–16 (GPPGSGKST) serves as a coordination point for ATP.

Belongs to the cytidylate kinase family. Type 2 subfamily.

The protein localises to the cytoplasm. The catalysed reaction is CMP + ATP = CDP + ADP. It carries out the reaction dCMP + ATP = dCDP + ADP. The protein is Cytidylate kinase of Ignicoccus hospitalis (strain KIN4/I / DSM 18386 / JCM 14125).